We begin with the raw amino-acid sequence, 393 residues long: uncharacterized protein (393 aa).

Disordered stretches follow at residues 77-118 and 259-296; these read DSNN…SIRP and INNN…DESN. Positions 79–92 are enriched in low complexity; that stretch reads NNNNNNNNNNNNNN. A compositionally biased stretch (polar residues) spans 103 to 114; sequence IRQSLSSPQQLV. Low complexity predominate over residues 259 to 289; that stretch reads INNNNNNNNNNSNNNNNNNNSNNNDNNNNIN.

This is an uncharacterized protein from Dictyostelium discoideum (Social amoeba).